Consider the following 526-residue polypeptide: Triacylglycerol lipase OBL1 (526 aa).

A helical membrane pass occupies residues 79-99 (GHLTDFLLNFYYQNHGFLGIL). Residues 338–342 (GHSLG) carry the GXSXG motif. Ser-340 functions as the Nucleophile in the catalytic mechanism. Catalysis depends on charge relay system residues Asp-404 and His-497.

Belongs to the AB hydrolase superfamily. Lipase family.

The protein localises to the membrane. It catalyses the reaction a triacylglycerol + H2O = a diacylglycerol + a fatty acid + H(+). Functionally, acid lipase that can hydrolyze a range of triacylglycerols but is not active on phospholipids. In vitro, hydrolyzes triolein, trilinolein, triricinolein, tripalmitin, trilaurin and tricaprin. May play a role in the regulation of lipolysis in germinating seeds. The sequence is that of Triacylglycerol lipase OBL1 from Ricinus communis (Castor bean).